A 166-amino-acid polypeptide reads, in one-letter code: Ribosome maturation factor RimP (166 aa).

This sequence belongs to the RimP family.

The protein resides in the cytoplasm. In terms of biological role, required for maturation of 30S ribosomal subunits. The sequence is that of Ribosome maturation factor RimP from Psychrobacter cryohalolentis (strain ATCC BAA-1226 / DSM 17306 / VKM B-2378 / K5).